The primary structure comprises 93 residues: Large ribosomal subunit protein uL23cz/uL23cy (93 aa).

This sequence belongs to the universal ribosomal protein uL23 family. Part of the 50S ribosomal subunit.

The protein resides in the plastid. It is found in the chloroplast. In terms of biological role, binds to 23S rRNA. The polypeptide is Large ribosomal subunit protein uL23cz/uL23cy (rpl23-A) (Phaseolus angularis (Azuki bean)).